Here is a 146-residue protein sequence, read N- to C-terminus: Stress-responsive DNAJB4-interacting membrane protein 1 (146 aa).

Positions 1-26 (MWPAPCSVGRLLIFFMCSSSGYVVQG) are cleaved as a signal peptide. Residues 27–66 (CGPSPGARTTLGSPLSLWSIKTPSHIFCTRRAINLGFPSP) lie on the Extracellular side of the membrane. Residues 67–87 (PLVQLIFWSLNAGLDLYLCLI) form a helical membrane-spanning segment. Residues 88 to 94 (SSCGFSQ) are Cytoplasmic-facing. A helical membrane pass occupies residues 95–115 (VFWPVEAFCSFSLSFFALALS). The Extracellular portion of the chain corresponds to 116 to 146 (HKFVICRLDQHIFSGFTKSLKNLPPCHRTDI).

Homodimer. Interacts with DNAJB4. In terms of tissue distribution, expressed in brain with higher detection in neurons than astrocytes. Decreased expression in Alzheimer brains. Detected at protein level in brain and cervix.

It localises to the membrane. Functionally, promotes neuronal cells survival to stress conditions. This chain is Stress-responsive DNAJB4-interacting membrane protein 1 (SDIM1), found in Homo sapiens (Human).